The following is an 850-amino-acid chain: Pentatricopeptide repeat-containing protein At5g16860 (850 aa).

PPR repeat units lie at residues 58–88 (TLNL…FPPS), 91–125 (GVYH…SWTP), 126–160 (DNYT…GFIS), 161–191 (NVFV…MSVW), 192–227 (DVVS…GCRP), 228–262 (DNIT…EMIQ), 263–293 (NMFV…MSVK), 294–328 (DVVS…KIKM), 329–363 (DVVT…GIKP), 364–398 (NEVT…PIDL), 406–436 (ENMV…LSPK), 439–473 (DVVT…DCQT), 476–510 (NAFT…QQNA), 512–542 (PLFV…MMAK), 543–577 (NEVT…GFKL), 578–608 (DGVT…MKTV), and 614–644 (GPEH…MPME). Residues 649-724 (VWVAFLSCCR…RPGCSWVEGI (76 aa)) are type E motif. Residues 725-755 (KGTTTFFVGDKTHPHAKEIYQVLLDHMQRIK) are type E(+) motif. Positions 756–850 (DIGYVPETGF…NGSCSCKGYW (95 aa)) are type DYW motif.

It belongs to the PPR family. PCMP-H subfamily.

The protein is Pentatricopeptide repeat-containing protein At5g16860 (PCMP-H92) of Arabidopsis thaliana (Mouse-ear cress).